A 637-amino-acid polypeptide reads, in one-letter code: Sodium-dependent proline transporter (637 aa).

Residues 1–45 (MKKLQEAHLRKPVTPDLLMTPSDQGDVDLDVDFAADRGNWTGKLD) are Cytoplasmic-facing. A Phosphothreonine modification is found at threonine 20. The residue at position 22 (serine 22) is a Phosphoserine. The next 3 membrane-spanning stretches (helical) occupy residues 46–66 (FLLS…FPYR), 74–93 (AFLV…LFFL), and 117–137 (GAGA…NMII). The Extracellular segment spans residues 138-214 (AYVLFYLFAS…QGIGRPGEIR (77 aa)). A glycan (N-linked (GlcNAc...) asparagine) is linked at asparagine 182. The next 9 membrane-spanning stretches (helical) occupy residues 215-233 (WNLC…LCIL), 242-259 (VVYF…MLLV), 295-312 (IFYS…FASY), 324-345 (FIVT…FSVL), 378-397 (LPLS…TLGL), 425-443 (VFSG…ILTT), 459-479 (SFGL…VYGI), 500-519 (ACWL…YSIV), and 538-556 (LGIL…GMLV). Residues 557 to 637 (AVLREEGSLW…IAEEEEESMM (81 aa)) are Cytoplasmic-facing. Phosphoserine occurs at positions 573 and 582. Threonine 588 carries the phosphothreonine modification. Tyrosine 591 bears the Phosphotyrosine mark. Serine 598 and serine 600 each carry phosphoserine.

It belongs to the sodium:neurotransmitter symporter (SNF) (TC 2.A.22) family. SLC6A7 subfamily. In terms of tissue distribution, expressed in subpopulations of putative glutamatergic pathways of rat brain.

The protein resides in the synaptic cell membrane. The enzyme catalyses L-proline(out) + chloride(out) + 2 Na(+)(out) = L-proline(in) + chloride(in) + 2 Na(+)(in). The catalysed reaction is L-pipecolate(out) + chloride(out) + 2 Na(+)(out) = L-pipecolate(in) + chloride(in) + 2 Na(+)(in). Its function is as follows. Brain specific sodium (and chloride)-dependent proline transporter. Terminates the action of proline by its high affinity sodium-dependent reuptake into presynaptic terminals. This is Sodium-dependent proline transporter (Slc6a7) from Rattus norvegicus (Rat).